The sequence spans 255 residues: Homeobox protein DLX-1 (255 aa).

Residues 1–14 are compositionally biased toward polar residues; it reads MTMTTMPESLNSPV. Disordered stretches follow at residues 1–38 and 95–118; these read MTMTTMPESLNSPVSGKAVFMEFGPPNQQMSPSPMSHG and SLAQSRLEDPGADSEKSTVVEGGE. The span at 25–36 shows a compositional bias: low complexity; the sequence is PPNQQMSPSPMS. A compositionally biased stretch (basic and acidic residues) spans 100 to 112; it reads RLEDPGADSEKST. The segment at residues 128–187 is a DNA-binding region (homeobox); it reads IRKPRTIYSSLQLQALNRRFQQTQYLALPERAELAASLGLTQTQVKIWFQNKRSKFKKLM. A disordered region spans residues 204-233; it reads ALSAGSPPVPPGWNPNSSSGKGSGSSAGSY. The span at 217 to 232 shows a compositional bias: low complexity; it reads NPNSSSGKGSGSSAGS.

It belongs to the distal-less homeobox family. As to quaternary structure, interacts with SMAD4 (via homeobox DNA-binding domain). Interacts (via homeobox DNA-binding domain) with POU4F2; this interaction suppresses DLX1-mediated transcriptional activity in postnatal retina and enhances retinal ganglion cell (RGC) differentiation. Expressed in a restricted region of the developing brain, within the diencephalon and the adjacent telencephalic regions.

The protein resides in the nucleus. Its function is as follows. Plays a role as a transcriptional activator or repressor. Inhibits several cytokine signaling pathways, such as TGFB1, activin-A/INHBA and BMP4 by interfering with the transcriptional stimulatory activity of transcription factors, such as MSX2, FAST2, SMAD2 and SMAD3 during hematopoietic cell differentiation. Plays a role in terminal differentiation of interneurons, such as amacrine and bipolar cells in the developing retina. Likely to play a regulatory role in the development of the ventral forebrain. May play a role in craniofacial patterning and morphogenesis and may be involved in the early development of diencephalic subdivisions. This chain is Homeobox protein DLX-1 (Dlx1), found in Mus musculus (Mouse).